The chain runs to 424 residues: Adenylosuccinate synthetase (424 aa).

Residues 12 to 18 and 40 to 42 each bind GTP; these read GDEGKGK and GHT. D13 (proton acceptor) is an active-site residue. Mg(2+)-binding residues include D13 and G40. IMP contacts are provided by residues 13-16, 38-41, T130, R144, N220, T235, and R299; these read DEGK and NAGH. The active-site Proton donor is the H41. 295–301 lines the substrate pocket; sequence VTTGRRR. GTP-binding positions include R301, 327-329, and 412-414; these read KLD and GTG.

It belongs to the adenylosuccinate synthetase family. In terms of assembly, homodimer. Mg(2+) serves as cofactor.

It localises to the cytoplasm. The catalysed reaction is IMP + L-aspartate + GTP = N(6)-(1,2-dicarboxyethyl)-AMP + GDP + phosphate + 2 H(+). The protein operates within purine metabolism; AMP biosynthesis via de novo pathway; AMP from IMP: step 1/2. Plays an important role in the de novo pathway and in the salvage pathway of purine nucleotide biosynthesis. Catalyzes the first committed step in the biosynthesis of AMP from IMP. This Aspergillus niger (strain ATCC MYA-4892 / CBS 513.88 / FGSC A1513) protein is Adenylosuccinate synthetase.